A 247-amino-acid chain; its full sequence is Carboxy-S-adenosyl-L-methionine synthase (247 aa).

Residues Tyr-39, 64-66 (GCS), 89-90 (DN), 117-118 (DI), Asn-132, and Arg-199 contribute to the S-adenosyl-L-methionine site.

Belongs to the class I-like SAM-binding methyltransferase superfamily. Cx-SAM synthase family. In terms of assembly, homodimer.

It carries out the reaction prephenate + S-adenosyl-L-methionine = carboxy-S-adenosyl-L-methionine + 3-phenylpyruvate + H2O. Its function is as follows. Catalyzes the conversion of S-adenosyl-L-methionine (SAM) to carboxy-S-adenosyl-L-methionine (Cx-SAM). The polypeptide is Carboxy-S-adenosyl-L-methionine synthase (Shigella sonnei (strain Ss046)).